Reading from the N-terminus, the 62-residue chain is Large ribosomal subunit protein bL28 (62 aa).

This sequence belongs to the bacterial ribosomal protein bL28 family.

This chain is Large ribosomal subunit protein bL28, found in Desulforamulus reducens (strain ATCC BAA-1160 / DSM 100696 / MI-1) (Desulfotomaculum reducens).